The chain runs to 595 residues: Proline--tRNA ligase (595 aa).

A disordered region spans residues 1-22; sequence MKMSTMFGATLHTAPGRSESEG.

Belongs to the class-II aminoacyl-tRNA synthetase family. ProS type 1 subfamily. Homodimer.

Its subcellular location is the cytoplasm. The catalysed reaction is tRNA(Pro) + L-proline + ATP = L-prolyl-tRNA(Pro) + AMP + diphosphate. Its function is as follows. Catalyzes the attachment of proline to tRNA(Pro) in a two-step reaction: proline is first activated by ATP to form Pro-AMP and then transferred to the acceptor end of tRNA(Pro). As ProRS can inadvertently accommodate and process non-cognate amino acids such as alanine and cysteine, to avoid such errors it has two additional distinct editing activities against alanine. One activity is designated as 'pretransfer' editing and involves the tRNA(Pro)-independent hydrolysis of activated Ala-AMP. The other activity is designated 'posttransfer' editing and involves deacylation of mischarged Ala-tRNA(Pro). The misacylated Cys-tRNA(Pro) is not edited by ProRS. The sequence is that of Proline--tRNA ligase from Salinispora tropica (strain ATCC BAA-916 / DSM 44818 / JCM 13857 / NBRC 105044 / CNB-440).